The following is a 127-amino-acid chain: Small ribosomal subunit protein bS6 (127 aa).

The protein belongs to the bacterial ribosomal protein bS6 family.

Functionally, binds together with bS18 to 16S ribosomal RNA. In Acinetobacter baumannii (strain AB0057), this protein is Small ribosomal subunit protein bS6.